The primary structure comprises 478 residues: Protein nucleotidyltransferase YdiU (478 aa).

Residues Gly-84, Gly-86, Arg-87, Lys-107, Asp-119, Gly-120, Arg-170, and Arg-177 each coordinate ATP. Asp-246 (proton acceptor) is an active-site residue. Asn-247 and Asp-256 together coordinate Mg(2+). Residue Asp-256 coordinates ATP.

It belongs to the SELO family. It depends on Mg(2+) as a cofactor. Mn(2+) is required as a cofactor.

It catalyses the reaction L-seryl-[protein] + ATP = 3-O-(5'-adenylyl)-L-seryl-[protein] + diphosphate. The catalysed reaction is L-threonyl-[protein] + ATP = 3-O-(5'-adenylyl)-L-threonyl-[protein] + diphosphate. It carries out the reaction L-tyrosyl-[protein] + ATP = O-(5'-adenylyl)-L-tyrosyl-[protein] + diphosphate. The enzyme catalyses L-histidyl-[protein] + UTP = N(tele)-(5'-uridylyl)-L-histidyl-[protein] + diphosphate. It catalyses the reaction L-seryl-[protein] + UTP = O-(5'-uridylyl)-L-seryl-[protein] + diphosphate. The catalysed reaction is L-tyrosyl-[protein] + UTP = O-(5'-uridylyl)-L-tyrosyl-[protein] + diphosphate. In terms of biological role, nucleotidyltransferase involved in the post-translational modification of proteins. It can catalyze the addition of adenosine monophosphate (AMP) or uridine monophosphate (UMP) to a protein, resulting in modifications known as AMPylation and UMPylation. The chain is Protein nucleotidyltransferase YdiU from Escherichia coli O6:K15:H31 (strain 536 / UPEC).